The following is a 434-amino-acid chain: Nicotinate phosphoribosyltransferase (434 aa).

Phosphohistidine; by autocatalysis is present on histidine 242.

The protein belongs to the NAPRTase family. Transiently phosphorylated on a His residue during the reaction cycle. Phosphorylation strongly increases the affinity for substrates and increases the rate of nicotinate D-ribonucleotide production. Dephosphorylation regenerates the low-affinity form of the enzyme, leading to product release.

It catalyses the reaction nicotinate + 5-phospho-alpha-D-ribose 1-diphosphate + ATP + H2O = nicotinate beta-D-ribonucleotide + ADP + phosphate + diphosphate. The protein operates within cofactor biosynthesis; NAD(+) biosynthesis; nicotinate D-ribonucleotide from nicotinate: step 1/1. Functionally, catalyzes the synthesis of beta-nicotinate D-ribonucleotide from nicotinate and 5-phospho-D-ribose 1-phosphate at the expense of ATP. This Rhizobium etli (strain ATCC 51251 / DSM 11541 / JCM 21823 / NBRC 15573 / CFN 42) protein is Nicotinate phosphoribosyltransferase.